The primary structure comprises 510 residues: Ferredoxin--nitrite reductase (510 aa).

[4Fe-4S] cluster is bound by residues Cys-396, Cys-402, Cys-437, and Cys-441. Cys-441 contributes to the siroheme binding site.

It belongs to the nitrite and sulfite reductase 4Fe-4S domain family.

It carries out the reaction 6 oxidized [2Fe-2S]-[ferredoxin] + NH4(+) + 2 H2O = nitrite + 6 reduced [2Fe-2S]-[ferredoxin] + 8 H(+). This chain is Ferredoxin--nitrite reductase (nirA), found in Leptolyngbya laminosa (Phormidium laminosum).